The sequence spans 430 residues: Probable aspartic-type endopeptidase ARB_07403 (430 aa).

The first 17 residues, Met1–Ser17, serve as a signal peptide directing secretion. Positions Lys18–Glu87 are cleaved as a propeptide — activation peptide. The interval Tyr66–His105 is disordered. Residues Glu87–Glu97 are compositionally biased toward basic and acidic residues. Residues Phe109–Ala427 enclose the Peptidase A1 domain. Asp125 is an active-site residue. N-linked (GlcNAc...) asparagine glycosylation is present at Asn306. The active site involves Asp314.

Belongs to the peptidase A1 family.

The protein localises to the secreted. In terms of biological role, probable secreted aspartic-type endopeptidase which contributes to virulence. This Arthroderma benhamiae (strain ATCC MYA-4681 / CBS 112371) (Trichophyton mentagrophytes) protein is Probable aspartic-type endopeptidase ARB_07403.